A 124-amino-acid polypeptide reads, in one-letter code: Small ribosomal subunit protein uS12 (124 aa).

D89 is subject to 3-methylthioaspartic acid.

The protein belongs to the universal ribosomal protein uS12 family. As to quaternary structure, part of the 30S ribosomal subunit. Contacts proteins S8 and S17. May interact with IF1 in the 30S initiation complex.

With S4 and S5 plays an important role in translational accuracy. Functionally, interacts with and stabilizes bases of the 16S rRNA that are involved in tRNA selection in the A site and with the mRNA backbone. Located at the interface of the 30S and 50S subunits, it traverses the body of the 30S subunit contacting proteins on the other side and probably holding the rRNA structure together. The combined cluster of proteins S8, S12 and S17 appears to hold together the shoulder and platform of the 30S subunit. In Hydrogenovibrio crunogenus (strain DSM 25203 / XCL-2) (Thiomicrospira crunogena), this protein is Small ribosomal subunit protein uS12.